Here is an 872-residue protein sequence, read N- to C-terminus: DNA mismatch repair protein MutS (872 aa).

622–629 contributes to the ATP binding site; the sequence is GPNMAGKS.

This sequence belongs to the DNA mismatch repair MutS family.

Its function is as follows. This protein is involved in the repair of mismatches in DNA. It is possible that it carries out the mismatch recognition step. This protein has a weak ATPase activity. The protein is DNA mismatch repair protein MutS of Geotalea uraniireducens (strain Rf4) (Geobacter uraniireducens).